The chain runs to 117 residues: Immunoglobulin heavy variable 1-2 (117 aa).

A signal peptide spans 1–19; it reads MDWTWRILFLVAAATGAHS. Pyrrolidone carboxylic acid is present on Gln-20. The tract at residues 20-44 is framework-1; sequence QVQLVQSGAEVKKPGASVKVSCKAS. One can recognise an Ig-like domain in the interval 20 to 117; that stretch reads QVQLVQSGAE…DDTAVYYCAR (98 aa). Cysteines 41 and 115 form a disulfide. Positions 45 to 52 are complementarity-determining-1; it reads GYTFTGYY. Residues 53–69 are framework-2; sequence MHWVRQAPGQGLEWMGW. The interval 70–77 is complementarity-determining-2; it reads INPNSGGT. Residues 78–115 form a framework-3 region; sequence NYAQKFQGWVTMTRDTSISTAYMELSRLRSDDTAVYYC. Residues 116-117 form a complementarity-determining-3 region; that stretch reads AR.

Immunoglobulins are composed of two identical heavy chains and two identical light chains; disulfide-linked.

The protein localises to the secreted. Its subcellular location is the cell membrane. V region of the variable domain of immunoglobulin heavy chains that participates in the antigen recognition. Immunoglobulins, also known as antibodies, are membrane-bound or secreted glycoproteins produced by B lymphocytes. In the recognition phase of humoral immunity, the membrane-bound immunoglobulins serve as receptors which, upon binding of a specific antigen, trigger the clonal expansion and differentiation of B lymphocytes into immunoglobulins-secreting plasma cells. Secreted immunoglobulins mediate the effector phase of humoral immunity, which results in the elimination of bound antigens. The antigen binding site is formed by the variable domain of one heavy chain, together with that of its associated light chain. Thus, each immunoglobulin has two antigen binding sites with remarkable affinity for a particular antigen. The variable domains are assembled by a process called V-(D)-J rearrangement and can then be subjected to somatic hypermutations which, after exposure to antigen and selection, allow affinity maturation for a particular antigen. This is Immunoglobulin heavy variable 1-2 from Homo sapiens (Human).